Here is a 100-residue protein sequence, read N- to C-terminus: Large ribosomal subunit protein bL27 (100 aa).

The propeptide occupies 1-9; that stretch reads MLSINLSLC.

It belongs to the bacterial ribosomal protein bL27 family. The N-terminus is cleaved by ribosomal processing cysteine protease Prp.

This is Large ribosomal subunit protein bL27 from Clostridium acetobutylicum (strain ATCC 824 / DSM 792 / JCM 1419 / IAM 19013 / LMG 5710 / NBRC 13948 / NRRL B-527 / VKM B-1787 / 2291 / W).